We begin with the raw amino-acid sequence, 941 residues long: MLRPQLNPSSSHHHTTTTSSSSSTQLYFASSSCIASLRRPSPPSLIAGAGCRTTRRRQQGRQRVVVRCASSSAASSASEAARRGTGSSDMAPAAVVKVKAVATIKVTVEGLLNSLRPSKAIDNIRDLIGRSLFLELVSSELEAKTGKKKATVHSYAHKVDDDDHGVVTYEADFDVPTGFGPIGAVVVTNELGQEMFLEDLNLTAGDGAGNSTVLPIRCNSWVQPKSSIDEGTPGKRIFFAKAYLPGQTPAGLRSYREEDLKQKRGNGAGQREADDRVYDYDVYNDLGNPDSNGDLARPVLGGSKQFPYPRRCRTGRPPSKKDPKSETRKGNVYVPRDEEFSEVKNAQFLLKTLQSVLHAAVPAAQSALIDNLSLNLPFPSFFVIDKLFEDGVELPGVEKLGFLHSIVPRLLELLRDSPGDKILLFDTPANVQKDKFAWLRDEEFARETLAGINPYAIELVREFPLKSKLDPAVYGPAESAITADLLEEQMRRVMTVEEAISQKRLFMLDFHDLFLPYVHKIRSLKHTTMYGSRTIFFLTDDGTLRLLAIELTRPASPSQPQWRQVFTPSTDTTKSWLWRMAKAHVRAHDAGHHELITHWLRTHCAVEPYIIAANRQLSEMHPIYQLLHPHFRYTMRINALARSRLISAAGIIELSFSPQKYSMELSSVAYDKLWRFDMEALPADLVRRGMAEEDPTAEHGLRLAIEDYPFANDGLLIWDAIKTWVQAYVARFYPDADSVAGDEELQAFWTEVRTKGHGDKKDAPWWPKLDSPESLAHTLTTIVWVAAAHHAAVNFGQYDFGGYFPNRPSIARTVMPVEEPVDGAAMERFLDNPDQALRECFPSQVQATVVMAVLDVLSTHSTDEEYLGGEQTRPWNSDAAVQAAYAGFTARLKEIEGVIDGRNKDRKLKNRCGAGILPYQLMKPFSDAGVTGMGIPNSTSI.

Disordered regions lie at residues 1–22 (MLRPQLNPSSSHHHTTTTSSSS) and 45–68 (LIAGAGCRTTRRRQQGRQRVVVRC). The N-terminal 67 residues, 1-67 (MLRPQLNPSS…QQGRQRVVVR (67 aa)), are a transit peptide targeting the chloroplast. The PLAT domain occupies 100 to 236 (AVATIKVTVE…SIDEGTPGKR (137 aa)). The region spanning 242-941 (AYLPGQTPAG…GMGIPNSTSI (700 aa)) is the Lipoxygenase domain. Disordered stretches follow at residues 255 to 274 (YREEDLKQKRGNGAGQREAD) and 288 to 331 (NPDS…RKGN). Over residues 319-331 (SKKDPKSETRKGN) the composition is skewed to basic and acidic residues. Positions 598, 603, 790, 794, and 941 each coordinate Fe cation.

This sequence belongs to the lipoxygenase family. Requires Fe cation as cofactor.

It localises to the plastid. The protein localises to the chloroplast. The catalysed reaction is (9Z,12Z)-octadecadienoate + O2 = (13S)-hydroperoxy-(9Z,11E)-octadecadienoate. It catalyses the reaction (9Z,12Z,15Z)-octadecatrienoate + O2 = (13S)-hydroperoxy-(9Z,11E,15Z)-octadecatrienoate. It participates in lipid metabolism; oxylipin biosynthesis. In terms of biological role, plant lipoxygenase may be involved in a number of diverse aspects of plant physiology including growth and development, pest resistance, and senescence or responses to wounding. It catalyzes the hydroperoxidation of lipids containing a cis,cis-1,4-pentadiene structure. In Oryza sativa subsp. japonica (Rice), this protein is Probable lipoxygenase 8, chloroplastic (CM-LOX2).